Here is a 349-residue protein sequence, read N- to C-terminus: Peroxisomal acyl-coenzyme A thioester hydrolase 1 (349 aa).

Catalysis depends on charge relay system residues D259, S282, and Q333. The short motif at 347–349 is the Microbody targeting signal element; the sequence is AKF.

This sequence belongs to the C/M/P thioester hydrolase family.

The protein resides in the peroxisome. It carries out the reaction hexadecanoyl-CoA + H2O = hexadecanoate + CoA + H(+). Its function is as follows. Acyl-coenzyme A (acyl-CoA) thioesterases are a group of enzymes that catalyze the hydrolysis of acyl-CoAs to the free fatty acid and coenzyme A (CoASH), providing the potential to regulate intracellular levels of acyl-CoAs, free fatty acids and CoASH. Contributes to growth on fatty acids. In Saccharomyces cerevisiae (strain ATCC 204508 / S288c) (Baker's yeast), this protein is Peroxisomal acyl-coenzyme A thioester hydrolase 1 (TES1).